The chain runs to 231 residues: mRNA-decapping enzyme subunit 1 (231 aa).

The tract at residues 92-120 is disordered; that stretch reads QNGSNNIQVNNGSDNSNRNSSGNGNSYKS. The segment covering 101 to 120 has biased composition (low complexity); that stretch reads NNGSDNSNRNSSGNGNSYKS.

The protein belongs to the DCP1 family. In terms of assembly, component of the decapping complex composed of DCP1 and DCP2. Interacts with mRNAs, DHH1, LSM1, LSM2, LSM3, LSM4, LSM5, LSM6, LSM7, and the cap-binding proteins PAB1 and TIF4632/eIF-4G. In terms of processing, phosphorylated.

The protein resides in the cytoplasm. The protein localises to the P-body. Component of the decapping complex necessary for the degradation of mRNAs, both in normal mRNA turnover and in nonsense-mediated mRNA decay. Removes the 7-methyl guanine cap structure from mRNA molecules, yielding a 5'-phosphorylated mRNA fragment and 7m-GDP. Decapping is the major pathway of mRNA degradation in yeast. It occurs through deadenylation, decapping and subsequent 5' to 3' exonucleolytic decay of the transcript body. DCP1 is activated by the DEAD-box helicase DHH1 and destabilizes the eIF-4F cap-binding complex from the mRNA. The polypeptide is mRNA-decapping enzyme subunit 1 (DCP1) (Saccharomyces cerevisiae (strain ATCC 204508 / S288c) (Baker's yeast)).